Reading from the N-terminus, the 357-residue chain is Glutamine synthetase root isozyme 1 (357 aa).

The region spanning 19 to 99 (IIAEYIWIGG…VMCDCYTPQG (81 aa)) is the GS beta-grasp domain. Positions 106–357 (KRYSAAKVFS…AETTILWNGN (252 aa)) constitute a GS catalytic domain.

It belongs to the glutamine synthetase family. As to quaternary structure, homooctamer. Found mainly in the cortical tissues of seedling roots, and in the root tip.

Its subcellular location is the cytoplasm. The enzyme catalyses L-glutamate + NH4(+) + ATP = L-glutamine + ADP + phosphate + H(+). Its function is as follows. Plays a role in the flow of nitrogen into nitrogenous organic compounds. In Zea mays (Maize), this protein is Glutamine synthetase root isozyme 1 (GLN6).